Here is a 212-residue protein sequence, read N- to C-terminus: Large ribosomal subunit protein mL48 (212 aa).

A mitochondrion-targeting transit peptide spans 1-28 (MSGTLEKVLCLRNNTIFKQAFSLLRFRT). The residue at position 199 (Lys199) is an N6-succinyllysine.

This sequence belongs to the mitochondrion-specific ribosomal protein mL48 family. Component of the mitochondrial large ribosomal subunit (mt-LSU). Mature mammalian 55S mitochondrial ribosomes consist of a small (28S) and a large (39S) subunit. The 28S small subunit contains a 12S ribosomal RNA (12S mt-rRNA) and 30 different proteins. The 39S large subunit contains a 16S rRNA (16S mt-rRNA), a copy of mitochondrial valine transfer RNA (mt-tRNA(Val)), which plays an integral structural role, and 52 different proteins. mL48 is located at the central protuberance. Interacts with OXA1L.

Its subcellular location is the mitochondrion. The protein is Large ribosomal subunit protein mL48 (MRPL48) of Homo sapiens (Human).